Consider the following 264-residue polypeptide: TLC domain-containing protein 4-B (264 aa).

The next 6 membrane-spanning stretches (helical) occupy residues 6–26 (VYVVAGSFVGFQLFFSCVSPV), 50–70 (LVSTVHALIVGLFCLYILWYD), 84–104 (LVKLNVAITCGYLFYDLLLLA), 110–130 (MGDVFFVCHHLAALYAYGYVL), 169–189 (LVVANGIAMAVVFFLVRIAVM), and 210–230 (LAIQVAWIISCVCLDILNIIW). Residues 41–243 (NKLNDWNSRL…IARGCYKVIT (203 aa)) enclose the TLC domain.

The protein belongs to the TLCD4 family.

It localises to the membrane. The polypeptide is TLC domain-containing protein 4-B (tlcd4b) (Danio rerio (Zebrafish)).